The sequence spans 154 residues: MPKTDVSGLSQLGTKVDLPQSPEEAVLERVPSGHEGTDFVVRFTAPEFTSLCPMTGQPDFAHIVIDYVPDGWLVESKSLKLFLHSFRNHGAFHEDCTVDIAKRLVSLLSPKWLRIGAYWYPRGGIPIDVFWQTGNPPEGVWLPDQGVPTYRGRG.

The tract at residues 1-24 (MPKTDVSGLSQLGTKVDLPQSPEE) is disordered. Cysteine 52 serves as the catalytic Thioimide intermediate. The active-site Proton donor is aspartate 59. Substrate is bound by residues 74–76 (VES) and 93–94 (HE).

The protein belongs to the GTP cyclohydrolase I family. QueF type 1 subfamily.

It is found in the cytoplasm. The catalysed reaction is 7-aminomethyl-7-carbaguanine + 2 NADP(+) = 7-cyano-7-deazaguanine + 2 NADPH + 3 H(+). It functions in the pathway tRNA modification; tRNA-queuosine biosynthesis. In terms of biological role, catalyzes the NADPH-dependent reduction of 7-cyano-7-deazaguanine (preQ0) to 7-aminomethyl-7-deazaguanine (preQ1). The polypeptide is NADPH-dependent 7-cyano-7-deazaguanine reductase (Sinorhizobium fredii (strain NBRC 101917 / NGR234)).